We begin with the raw amino-acid sequence, 436 residues long: GTPase Der (436 aa).

EngA-type G domains are found at residues P3–D168 and I177–S352. Residues G9–S16, D56–Y60, N120–E123, G183–S190, D230–L234, and N295–D298 each bind GTP. A KH-like domain is found at R353–K436.

This sequence belongs to the TRAFAC class TrmE-Era-EngA-EngB-Septin-like GTPase superfamily. EngA (Der) GTPase family. Associates with the 50S ribosomal subunit.

GTPase that plays an essential role in the late steps of ribosome biogenesis. The sequence is that of GTPase Der from Chlorobium luteolum (strain DSM 273 / BCRC 81028 / 2530) (Pelodictyon luteolum).